The following is a 279-amino-acid chain: Phosphate import ATP-binding protein PstB 2 (279 aa).

Residues 34 to 274 enclose the ABC transporter domain; sequence FDIENLDLYY…PSDDRTRGYV (241 aa). 66–73 is an ATP binding site; the sequence is GPSGCGKS.

Belongs to the ABC transporter superfamily. Phosphate importer (TC 3.A.1.7) family. In terms of assembly, the complex is composed of two ATP-binding proteins (PstB), two transmembrane proteins (PstC and PstA) and a solute-binding protein (PstS).

The protein resides in the cell inner membrane. It catalyses the reaction phosphate(out) + ATP + H2O = ADP + 2 phosphate(in) + H(+). Its function is as follows. Part of the ABC transporter complex PstSACB involved in phosphate import. Responsible for energy coupling to the transport system. In Vibrio vulnificus (strain YJ016), this protein is Phosphate import ATP-binding protein PstB 2.